The primary structure comprises 400 residues: Nicotinate phosphoribosyltransferase (400 aa).

H220 bears the Phosphohistidine; by autocatalysis mark.

Belongs to the NAPRTase family. Transiently phosphorylated on a His residue during the reaction cycle. Phosphorylation strongly increases the affinity for substrates and increases the rate of nicotinate D-ribonucleotide production. Dephosphorylation regenerates the low-affinity form of the enzyme, leading to product release.

The enzyme catalyses nicotinate + 5-phospho-alpha-D-ribose 1-diphosphate + ATP + H2O = nicotinate beta-D-ribonucleotide + ADP + phosphate + diphosphate. Its pathway is cofactor biosynthesis; NAD(+) biosynthesis; nicotinate D-ribonucleotide from nicotinate: step 1/1. Catalyzes the synthesis of beta-nicotinate D-ribonucleotide from nicotinate and 5-phospho-D-ribose 1-phosphate at the expense of ATP. The protein is Nicotinate phosphoribosyltransferase of Salmonella dublin (strain CT_02021853).